A 478-amino-acid polypeptide reads, in one-letter code: Proline--tRNA ligase (478 aa).

Belongs to the class-II aminoacyl-tRNA synthetase family. ProS type 3 subfamily. In terms of assembly, homodimer.

Its subcellular location is the cytoplasm. The catalysed reaction is tRNA(Pro) + L-proline + ATP = L-prolyl-tRNA(Pro) + AMP + diphosphate. In terms of biological role, catalyzes the attachment of proline to tRNA(Pro) in a two-step reaction: proline is first activated by ATP to form Pro-AMP and then transferred to the acceptor end of tRNA(Pro). The protein is Proline--tRNA ligase of Methanothrix thermoacetophila (strain DSM 6194 / JCM 14653 / NBRC 101360 / PT) (Methanosaeta thermophila).